The chain runs to 137 residues: Small integral membrane protein 9 (137 aa).

An N-terminal signal peptide occupies residues 1–23 (MKPLKLFCIGLLLCPLVCLLLET). Topologically, residues 24–84 (APPPSALLTL…NHLSDFFKSS (61 aa)) are extracellular. The helical transmembrane segment at 85–105 (IPPAAIFALFVTTAIMRAAIV) threads the bilayer. At 106-137 (NKRLEEPHRQWTIDQRSSLEMQNMNLIKLFGG) the chain is on the cytoplasmic side.

The protein localises to the cell membrane. This is Small integral membrane protein 9 (Smim9) from Mus musculus (Mouse).